Reading from the N-terminus, the 235-residue chain is Secretory carrier-associated membrane protein 5A (235 aa).

Topologically, residues 1–39 are cytoplasmic; that stretch reads MSDKPNNFPPLPRFIPLKPCFYQDFDTDIPDLHRTTAKR. Residues 40-60 form a helical membrane-spanning segment; that stretch reads LYYLWMLNSITLGVNLIGCLA. Over 61 to 67 the chain is Extracellular; that stretch reads WLIGGGS. A helical transmembrane segment spans residues 68-88; the sequence is ATNFGLAFLWLILFTPCSYVC. Topologically, residues 89–102 are cytoplasmic; it reads WFRPIYKAFKTDSS. The helical transmembrane segment at 103-125 threads the bilayer; it reads FNFMAFFFTFTAQLVISIIQAVG. Over 126-148 the chain is Extracellular; the sequence is IPGWGVCGWIASISFFGTNVGSA. A helical membrane pass occupies residues 149 to 169; that stretch reads VVMLIPTIMFTAVAVLSFVAL. Over 170 to 235 the chain is Cytoplasmic; sequence TKVHRFYRGA…TPNYGYSNEM (66 aa).

This sequence belongs to the SCAMP family. SCAMP5 subfamily.

Its subcellular location is the cell membrane. It is found in the golgi apparatus membrane. It localises to the golgi apparatus. The protein localises to the trans-Golgi network membrane. The protein resides in the recycling endosome membrane. Its subcellular location is the cytoplasmic vesicle. It is found in the secretory vesicle. It localises to the synaptic vesicle membrane. Required for the calcium-dependent exocytosis of signal sequence-containing cytokines. Probably acts in cooperation with the SNARE machinery. The sequence is that of Secretory carrier-associated membrane protein 5A (scamp5-a) from Xenopus laevis (African clawed frog).